A 391-amino-acid polypeptide reads, in one-letter code: Lipoyl synthase, mitochondrial (391 aa).

Residues 1 to 44 (MVHPHLSRTKRTFFSHSSQMISRHIRKTNSLAFVRALSASETAV) constitute a mitochondrion transit peptide. [4Fe-4S] cluster is bound by residues Cys-120, Cys-125, Cys-131, Cys-150, Cys-154, Cys-157, and Ser-365. A Radical SAM core domain is found at 135-354 (KKSEATATIM…KEVALEMGFL (220 aa)).

The protein belongs to the radical SAM superfamily. Lipoyl synthase family. Requires [4Fe-4S] cluster as cofactor.

The protein resides in the mitochondrion. It catalyses the reaction [[Fe-S] cluster scaffold protein carrying a second [4Fe-4S](2+) cluster] + N(6)-octanoyl-L-lysyl-[protein] + 2 oxidized [2Fe-2S]-[ferredoxin] + 2 S-adenosyl-L-methionine + 4 H(+) = [[Fe-S] cluster scaffold protein] + N(6)-[(R)-dihydrolipoyl]-L-lysyl-[protein] + 4 Fe(3+) + 2 hydrogen sulfide + 2 5'-deoxyadenosine + 2 L-methionine + 2 reduced [2Fe-2S]-[ferredoxin]. It functions in the pathway protein modification; protein lipoylation via endogenous pathway; protein N(6)-(lipoyl)lysine from octanoyl-[acyl-carrier-protein]: step 2/2. Catalyzes the radical-mediated insertion of two sulfur atoms into the C-6 and C-8 positions of the octanoyl moiety bound to the lipoyl domains of lipoate-dependent enzymes, thereby converting the octanoylated domains into lipoylated derivatives. The chain is Lipoyl synthase, mitochondrial from Clavispora lusitaniae (strain ATCC 42720) (Yeast).